A 78-amino-acid polypeptide reads, in one-letter code: Large ribosomal subunit protein uL10 (78 aa).

Low complexity predominate over residues 40–50 (AAAAAATAPAA). Residues 40–78 (AAAAAATAPAAETKKEEKKEEKKEETEESDDDIGLSLFH) form a disordered region. Residues 51–64 (ETKKEEKKEEKKEE) show a composition bias toward basic and acidic residues.

It belongs to the universal ribosomal protein uL10 family. P0 forms a pentameric complex by interaction with dimers of P1 and P2.

The protein resides in the nucleus. It localises to the cytoplasm. Its function is as follows. Ribosomal protein P0 is the functional equivalent of E.coli protein L10. In Culicoides nubeculosus (Biting midge), this protein is Large ribosomal subunit protein uL10.